The following is a 289-amino-acid chain: Heme oxygenase 1, chloroplastic (289 aa).

A chloroplast-targeting transit peptide spans 1–64 (MAPAAASLTA…SASSSRRMVV (64 aa)). Histidine 96 serves as a coordination point for heme b.

This sequence belongs to the heme oxygenase family.

Its subcellular location is the plastid. The protein resides in the chloroplast. The enzyme catalyses heme b + 3 reduced [NADPH--hemoprotein reductase] + 3 O2 = biliverdin IXalpha + CO + Fe(2+) + 3 oxidized [NADPH--hemoprotein reductase] + 3 H2O + H(+). Catalyzes the opening of the heme ring to form the open-chain tetrapyrrole biliverdin IX with the release of iron and carbon monoxide (CO). Is a key enzyme in the synthesis of the chromophore of the phytochrome family of plant photoreceptors. Essential for photoperiod response and repression of flowering through cytochromes that inhibit flowering by affecting both HD1 and EHD1 flowering pathways. This Oryza sativa subsp. japonica (Rice) protein is Heme oxygenase 1, chloroplastic (HO1).